The following is a 361-amino-acid chain: S-adenosylmethionine:tRNA ribosyltransferase-isomerase (361 aa).

It belongs to the QueA family. As to quaternary structure, monomer.

The protein resides in the cytoplasm. The catalysed reaction is 7-aminomethyl-7-carbaguanosine(34) in tRNA + S-adenosyl-L-methionine = epoxyqueuosine(34) in tRNA + adenine + L-methionine + 2 H(+). It functions in the pathway tRNA modification; tRNA-queuosine biosynthesis. Functionally, transfers and isomerizes the ribose moiety from AdoMet to the 7-aminomethyl group of 7-deazaguanine (preQ1-tRNA) to give epoxyqueuosine (oQ-tRNA). In Rhizobium etli (strain ATCC 51251 / DSM 11541 / JCM 21823 / NBRC 15573 / CFN 42), this protein is S-adenosylmethionine:tRNA ribosyltransferase-isomerase.